Reading from the N-terminus, the 304-residue chain is N-acetyl-D-glucosamine kinase (304 aa).

ATP-binding positions include 4–11 (GFDMGGTK) and 133–140 (GVGGGLIV). Residues His157, Cys177, Cys179, and Cys184 each contribute to the Zn(2+) site.

This sequence belongs to the ROK (NagC/XylR) family. NagK subfamily.

It catalyses the reaction N-acetyl-D-glucosamine + ATP = N-acetyl-D-glucosamine 6-phosphate + ADP + H(+). It participates in cell wall biogenesis; peptidoglycan recycling. In terms of biological role, catalyzes the phosphorylation of N-acetyl-D-glucosamine (GlcNAc) derived from cell-wall degradation, yielding GlcNAc-6-P. The protein is N-acetyl-D-glucosamine kinase of Yersinia pseudotuberculosis serotype O:1b (strain IP 31758).